The sequence spans 368 residues: Proline-rich protein 5-like (368 aa).

Phosphoserine is present on S28. The disordered stretch occupies residues 312–368; sequence LGEESGGEDKCLLLQPSFPPPHRQCSSEPNITDGPDEPEQGATGSQEDSELNCASLS. Polar residues predominate over residues 353 to 368; that stretch reads ATGSQEDSELNCASLS.

It belongs to the PROTOR family. Interacts with the mammalian target of rapamycin complex 2 (mTORC2) which contains MTOR, MLST8, PRR5, RICTOR, MAPKAP1 and DEPTOR. Interacts with RFFL. Interacts (via C-terminus) with ZFP36 (via C-terminus); this interaction may accelerate ZFP36-mediated mRNA decay during stress. Interacts with RICTOR. Post-translationally, ubiquitinated. Ubiquitination by RFFL promotes proteasomal degradation of PRR5L thereby modifying the substrate-specific activity of the mTORC2 complex. Ubiquitination by RFFL is stimulated by LPA/lysophosphatidic acid.

In terms of biological role, associates with the mTORC2 complex that regulates cellular processes including survival and organization of the cytoskeleton. Regulates the activity of the mTORC2 complex in a substrate-specific manner preventing for instance the specific phosphorylation of PKCs and thereby controlling cell migration. Plays a role in the stimulation of ZFP36-mediated mRNA decay of several ZFP36-associated mRNAs, such as TNF-alpha and GM-CSF, in response to stress. Required for ZFP36 localization to cytoplasmic stress granule (SG) and P-body (PB) in response to stress. The protein is Proline-rich protein 5-like (PRR5L) of Bos taurus (Bovine).